A 76-amino-acid chain; its full sequence is Translation initiation factor IF-1 (76 aa).

Residues 1-72 (MAKKDVVVMQ…NKGRIVKREK (72 aa)) form the S1-like domain.

It belongs to the IF-1 family. In terms of assembly, component of the 30S ribosomal translation pre-initiation complex which assembles on the 30S ribosome in the order IF-2 and IF-3, IF-1 and N-formylmethionyl-tRNA(fMet); mRNA recruitment can occur at any time during PIC assembly.

It is found in the cytoplasm. One of the essential components for the initiation of protein synthesis. Stabilizes the binding of IF-2 and IF-3 on the 30S subunit to which N-formylmethionyl-tRNA(fMet) subsequently binds. Helps modulate mRNA selection, yielding the 30S pre-initiation complex (PIC). Upon addition of the 50S ribosomal subunit IF-1, IF-2 and IF-3 are released leaving the mature 70S translation initiation complex. This is Translation initiation factor IF-1 from Petrotoga mobilis (strain DSM 10674 / SJ95).